Reading from the N-terminus, the 296-residue chain is Ribosomal RNA small subunit methyltransferase A (296 aa).

S-adenosyl-L-methionine contacts are provided by N32, L34, G59, E80, D105, and N130.

The protein belongs to the class I-like SAM-binding methyltransferase superfamily. rRNA adenine N(6)-methyltransferase family. RsmA subfamily.

It localises to the cytoplasm. The catalysed reaction is adenosine(1518)/adenosine(1519) in 16S rRNA + 4 S-adenosyl-L-methionine = N(6)-dimethyladenosine(1518)/N(6)-dimethyladenosine(1519) in 16S rRNA + 4 S-adenosyl-L-homocysteine + 4 H(+). Specifically dimethylates two adjacent adenosines (A1518 and A1519) in the loop of a conserved hairpin near the 3'-end of 16S rRNA in the 30S particle. May play a critical role in biogenesis of 30S subunits. This chain is Ribosomal RNA small subunit methyltransferase A, found in Levilactobacillus brevis (strain ATCC 367 / BCRC 12310 / CIP 105137 / JCM 1170 / LMG 11437 / NCIMB 947 / NCTC 947) (Lactobacillus brevis).